We begin with the raw amino-acid sequence, 686 residues long: Kinesin light chain (686 aa).

Disordered stretches follow at residues 1 to 23 (MSGSKLSTPNNSGGGQGNLSQEQ) and 158 to 204 (KYDE…SVSA). A coiled-coil region spans residues 20-160 (SQEQIITGTR…EYMNSIKKYD (141 aa)). TPR repeat units follow at residues 215–248 (LRTLHNLVIQYASQSRYEVAVPLCKQALEDLEKT), 257–290 (ATMLNILALVYRDQNKYKEAGNLLHDALAIREKT), 299–332 (AATLNNLAVLYGKRGKYKEAEPLCKRALEIREKV), 341–374 (AKQLNNLALLCQNQGKYEEVEWYYQRALEIYEKK), 383–416 (AKTKNNLAAAYLKQGKYKAAETLYKQVLTRAHER), and 472–505 (TTTLKNLGALYRRQGKYDAAEILEECAMKSRRNA). Disordered stretches follow at residues 520-558 (QDLSTDVPRSEAMAKERHHRRSSGTPRHGSTESVSYEKT) and 586-686 (GYVE…SGNF). Positions 675 to 686 (DNLSSRRQSGNF) are enriched in polar residues.

The protein belongs to the kinesin light chain family. As to quaternary structure, oligomeric complex composed of two heavy chains and two light chains. Post-translationally, phosphorylation may modulate the process of mechanochemical coupling.

The protein resides in the cytoplasm. Its subcellular location is the cytoskeleton. Kinesin is a microtubule-associated force-producing protein that may play a role in organelle transport. The light chain may function in coupling of cargo to the heavy chain or in the modulation of its ATPase activity. The polypeptide is Kinesin light chain (Strongylocentrotus purpuratus (Purple sea urchin)).